The chain runs to 537 residues: Beta-galactoside alpha-2,6-sialyltransferase 2 (537 aa).

At 1–10 the chain is on the cytoplasmic side; that stretch reads MKSWVRQGRR. Residues 11-31 form a helical; Signal-anchor for type II membrane protein membrane-spanning segment; it reads LVLVGMLAWVLLFLALLSYFL. Over 32–537 the chain is Lumenal; sequence DARVNEPLTS…PGFSTVDCDI (506 aa). Disordered regions lie at residues 83–117 and 134–202; these read TRDEPRPSATPEFSLEASQSPDSAPLAIYGGPEGI and GTEN…GDSS. Residues 134 to 145 are compositionally biased toward polar residues; that stretch reads GTENIGSQSDPV. The span at 166-185 shows a compositional bias: acidic residues; sequence EEEEEEEEEEERQENEDEDV. Disulfide bonds link C265–C535, C312–C464, and C482–C493. N-linked (GlcNAc...) asparagine glycans are attached at residues N353 and N373.

Belongs to the glycosyltransferase 29 family.

It localises to the golgi apparatus. It is found in the golgi stack membrane. It carries out the reaction a beta-D-galactoside + CMP-N-acetyl-beta-neuraminate = an N-acetyl-alpha-neuraminyl-(2-&gt;6)-beta-D-galactosyl derivative + CMP + H(+). Functionally, transfers sialic acid from the donor of substrate CMP-sialic acid to galactose containing acceptor substrates. The polypeptide is Beta-galactoside alpha-2,6-sialyltransferase 2 (st6gal2) (Takifugu rubripes (Japanese pufferfish)).